An 83-amino-acid chain; its full sequence is Small ribosomal subunit protein uS17 (83 aa).

It belongs to the universal ribosomal protein uS17 family. Part of the 30S ribosomal subunit.

One of the primary rRNA binding proteins, it binds specifically to the 5'-end of 16S ribosomal RNA. The protein is Small ribosomal subunit protein uS17 of Thermodesulfovibrio yellowstonii (strain ATCC 51303 / DSM 11347 / YP87).